The following is a 209-amino-acid chain: UPF0174 protein HP_1587 (209 aa).

The protein belongs to the UPF0174 family.

This Helicobacter pylori (strain ATCC 700392 / 26695) (Campylobacter pylori) protein is UPF0174 protein HP_1587.